The sequence spans 216 residues: MOB kinase activator-like 2A (216 aa).

Zn(2+) is bound by residues Cys-81, Cys-86, His-162, and His-167.

Belongs to the MOB1/phocein family.

It localises to the nucleus. The protein is MOB kinase activator-like 2A of Arabidopsis thaliana (Mouse-ear cress).